The primary structure comprises 702 residues: Flagellar operon control protein UmoB (702 aa).

5 helical membrane-spanning segments follow: residues 4 to 24 (SVII…FLFF), 204 to 224 (GFWN…ALMM), 227 to 247 (VFLP…LFLI), 343 to 363 (IIFV…QPLS), and 656 to 676 (GNTL…FFII).

It belongs to the IgaA family.

It localises to the cell inner membrane. In terms of biological role, up-regulator of flagellar flhDC master operon. This Proteus mirabilis protein is Flagellar operon control protein UmoB (umoB).